We begin with the raw amino-acid sequence, 831 residues long: Periplasmic nitrate reductase (831 aa).

The segment at residues 1 to 31 (MTISRRDLLKAQAAGIAAMAANIPLSSQAPA) is a signal peptide (tat-type signal). Residues 41 to 97 (ITWSKAPCRFCGTGCGVMVGVKEGRVVATHGDLLAEVNRGLNCVKGYFLSKIMYGAD) form the 4Fe-4S Mo/W bis-MGD-type domain. [4Fe-4S] cluster contacts are provided by Cys-48, Cys-51, Cys-55, and Cys-83. Mo-bis(molybdopterin guanine dinucleotide) is bound by residues Lys-85, Gln-152, Asn-177, Cys-181, 214 to 221 (WGSNMAEM), 245 to 249 (STFTH), 264 to 266 (GTD), Met-375, Gln-379, Asn-485, 511 to 512 (SD), Lys-534, Asp-561, and 721 to 730 (TGRVLEHWHS). Residue Trp-797 coordinates substrate. Mo-bis(molybdopterin guanine dinucleotide) is bound by residues Asn-805 and Lys-822.

This sequence belongs to the prokaryotic molybdopterin-containing oxidoreductase family. NasA/NapA/NarB subfamily. In terms of assembly, component of the periplasmic nitrate reductase NapAB complex composed of NapA and NapB. The cofactor is [4Fe-4S] cluster. It depends on Mo-bis(molybdopterin guanine dinucleotide) as a cofactor. Post-translationally, predicted to be exported by the Tat system. The position of the signal peptide cleavage has not been experimentally proven.

It localises to the periplasm. It carries out the reaction 2 Fe(II)-[cytochrome] + nitrate + 2 H(+) = 2 Fe(III)-[cytochrome] + nitrite + H2O. Its function is as follows. Catalytic subunit of the periplasmic nitrate reductase complex NapAB. Receives electrons from NapB and catalyzes the reduction of nitrate to nitrite. This is Periplasmic nitrate reductase from Paracoccus pantotrophus (Thiosphaera pantotropha).